A 383-amino-acid polypeptide reads, in one-letter code: Probable mannan endo-1,4-beta-mannosidase A (383 aa).

An N-terminal signal peptide occupies residues 1–21; that stretch reads MKLSNALLTLASLALANVSTA. An N-linked (GlcNAc...) asparagine glycan is attached at asparagine 17. Tryptophan 92 contacts substrate. An N-linked (GlcNAc...) asparagine glycan is attached at asparagine 194. Residue asparagine 205 coordinates substrate. The Proton donor role is filled by glutamate 206. N-linked (GlcNAc...) asparagine glycosylation occurs at asparagine 263. Tyrosine 281 is a binding site for substrate. The Nucleophile role is filled by glutamate 314. Tryptophan 344 is a binding site for substrate.

Belongs to the glycosyl hydrolase 5 (cellulase A) family.

The protein resides in the secreted. The enzyme catalyses Random hydrolysis of (1-&gt;4)-beta-D-mannosidic linkages in mannans, galactomannans and glucomannans.. In terms of biological role, endo-1,4-mannanase, a crucial enzyme for depolymerization of seed galactomannans and wood galactoglucomannans. This chain is Probable mannan endo-1,4-beta-mannosidase A (manA), found in Aspergillus niger (strain ATCC MYA-4892 / CBS 513.88 / FGSC A1513).